A 159-amino-acid polypeptide reads, in one-letter code: Nucleotide-binding protein PSPA7_4966 (159 aa).

The protein belongs to the YajQ family.

Its function is as follows. Nucleotide-binding protein. This Pseudomonas paraeruginosa (strain DSM 24068 / PA7) (Pseudomonas aeruginosa (strain PA7)) protein is Nucleotide-binding protein PSPA7_4966.